Consider the following 204-residue polypeptide: Large ribosomal subunit protein uL3 (204 aa).

This sequence belongs to the universal ribosomal protein uL3 family. In terms of assembly, part of the 50S ribosomal subunit. Forms a cluster with proteins L14 and L19.

Its function is as follows. One of the primary rRNA binding proteins, it binds directly near the 3'-end of the 23S rRNA, where it nucleates assembly of the 50S subunit. This chain is Large ribosomal subunit protein uL3, found in Azobacteroides pseudotrichonymphae genomovar. CFP2.